Consider the following 112-residue polypeptide: Cell cycle protein GpsB (112 aa).

Positions 38–72 (IKDYEAFHKEFEQLKQQNARLKRELEEQKLVATQV) form a coiled coil.

It belongs to the GpsB family. In terms of assembly, forms polymers through the coiled coil domains. Interacts with PBP1, MreC and EzrA.

Its subcellular location is the cytoplasm. Divisome component that associates with the complex late in its assembly, after the Z-ring is formed, and is dependent on DivIC and PBP2B for its recruitment to the divisome. Together with EzrA, is a key component of the system that regulates PBP1 localization during cell cycle progression. Its main role could be the removal of PBP1 from the cell pole after pole maturation is completed. Also contributes to the recruitment of PBP1 to the division complex. Not essential for septum formation. This chain is Cell cycle protein GpsB, found in Bacillus cereus (strain ZK / E33L).